Here is a 330-residue protein sequence, read N- to C-terminus: Protein pelota homolog (330 aa).

It belongs to the eukaryotic release factor 1 family. Pelota subfamily. In terms of assembly, monomer. The cofactor is a divalent metal cation.

It localises to the cytoplasm. May function in recognizing stalled ribosomes, interact with stem-loop structures in stalled mRNA molecules, and effect endonucleolytic cleavage of the mRNA. May play a role in the release non-functional ribosomes and degradation of damaged mRNAs. Has endoribonuclease activity. In Pyrobaculum neutrophilum (strain DSM 2338 / JCM 9278 / NBRC 100436 / V24Sta) (Thermoproteus neutrophilus), this protein is Protein pelota homolog.